Consider the following 283-residue polypeptide: uncharacterized protein (283 aa).

Positions 1–10 (MEVNKTTESL) are enriched in polar residues. Disordered stretches follow at residues 1–96 (MEVN…SGGN) and 255–283 (DQEG…EAQI). Composition is skewed to basic and acidic residues over residues 14–34 (KVEH…RDVK) and 44–81 (SKQE…VSSR).

This sequence belongs to the chlamydial CPn_0705/CT_671/TC_0042 family.

This is an uncharacterized protein from Chlamydia muridarum (strain MoPn / Nigg).